The chain runs to 252 residues: Chitooligosaccharide deacetylase (252 aa).

Mg(2+) contacts are provided by H61 and H125.

This sequence belongs to the YdjC deacetylase family. ChbG subfamily. As to quaternary structure, homodimer. Mg(2+) is required as a cofactor.

The protein localises to the cytoplasm. The enzyme catalyses N,N'-diacetylchitobiose + H2O = N-acetyl-beta-D-glucosaminyl-(1-&gt;4)-D-glucosamine + acetate. The catalysed reaction is diacetylchitobiose-6'-phosphate + H2O = N'-monoacetylchitobiose-6'-phosphate + acetate. It functions in the pathway glycan degradation; chitin degradation. In terms of biological role, involved in the degradation of chitin. ChbG is essential for growth on the acetylated chitooligosaccharides chitobiose and chitotriose but is dispensable for growth on cellobiose and chitosan dimer, the deacetylated form of chitobiose. Deacetylation of chitobiose-6-P and chitotriose-6-P is necessary for both the activation of the chb promoter by the regulatory protein ChbR and the hydrolysis of phosphorylated beta-glucosides by the phospho-beta-glucosidase ChbF. Catalyzes the removal of only one acetyl group from chitobiose-6-P to yield monoacetylchitobiose-6-P, the inducer of ChbR and the substrate of ChbF. The sequence is that of Chitooligosaccharide deacetylase from Salmonella paratyphi B (strain ATCC BAA-1250 / SPB7).